A 593-amino-acid chain; its full sequence is UvrABC system protein C (593 aa).

One can recognise a GIY-YIG domain in the interval 14–91; sequence DSPGCYLHKD…IQENMPKYNI (78 aa). The UVR domain maps to 196–231; the sequence is NKIVNGLTEKMKSAAMTMEFERAAEYRDLIEAISLL.

The protein belongs to the UvrC family. As to quaternary structure, interacts with UvrB in an incision complex.

The protein localises to the cytoplasm. The UvrABC repair system catalyzes the recognition and processing of DNA lesions. UvrC both incises the 5' and 3' sides of the lesion. The N-terminal half is responsible for the 3' incision and the C-terminal half is responsible for the 5' incision. In Streptococcus agalactiae serotype V (strain ATCC BAA-611 / 2603 V/R), this protein is UvrABC system protein C.